The chain runs to 232 residues: Putative homeobox protein NANOG2 (232 aa).

Residues 1–39 form a disordered region; that stretch reads MDLPIQDSHDSSTSPKGKQPTTAEKSATKKEDKVPVKKQ. Residues 11 to 25 show a composition bias toward polar residues; it reads SSTSPKGKQPTTAEK. Residues 26–35 show a composition bias toward basic and acidic residues; sequence SATKKEDKVP. Repeat copies occupy residues 123 to 127, 128 to 132, 133 to 137, 143 to 147, 148 to 152, 153 to 157, 158 to 162, and 163 to 167. Residues 123–167 are 8 X repeats starting with a Trp in each unit; it reads WSNQTWNNSTWSNQTQNIQSWSNHSWNTQTWCTQSWNNQAWNSPF. Positions 123–167 are sufficient for transactivation activity; sequence WSNQTWNNSTWSNQTQNIQSWSNHSWNTQTWCTQSWNNQAWNSPF. Residues 168–232 form a sufficient for strong transactivation activity region; it reads YNCGEESLQS…YSTNMXXEDV (65 aa).

The protein belongs to the Nanog homeobox family.

The protein resides in the nucleus. Its function is as follows. Probable transcriptional regulator. The protein is Putative homeobox protein NANOG2 (NANOGP1) of Pan paniscus (Pygmy chimpanzee).